The following is a 591-amino-acid chain: Probable methyltransferase PMT6 (591 aa).

At 1 to 13 (MRGSVIGAERSGQ) the chain is on the cytoplasmic side. Residues 14–34 (TIMVALVLMVGSFYTGSLFGT) form a helical; Signal-anchor for type II membrane protein membrane-spanning segment. Over 35-591 (NQPIYVSHPS…FCRKRFWAII (557 aa)) the chain is Lumenal. Residues N87, N99, N146, N193, N323, N436, N473, and N515 are each glycosylated (N-linked (GlcNAc...) asparagine).

The protein belongs to the methyltransferase superfamily.

It localises to the endoplasmic reticulum membrane. This chain is Probable methyltransferase PMT6, found in Arabidopsis thaliana (Mouse-ear cress).